Consider the following 281-residue polypeptide: Pantothenate synthetase (281 aa).

30–37 serves as a coordination point for ATP; sequence MGNLHQGH. His37 functions as the Proton donor in the catalytic mechanism. Gln61 contributes to the (R)-pantoate binding site. Gln61 lines the beta-alanine pocket. 148–151 is a binding site for ATP; the sequence is GQKD. Gln154 is a binding site for (R)-pantoate. ATP is bound by residues Ala177 and 185–188; that span reads LSSR.

Belongs to the pantothenate synthetase family. Homodimer.

The protein localises to the cytoplasm. It catalyses the reaction (R)-pantoate + beta-alanine + ATP = (R)-pantothenate + AMP + diphosphate + H(+). Its pathway is cofactor biosynthesis; (R)-pantothenate biosynthesis; (R)-pantothenate from (R)-pantoate and beta-alanine: step 1/1. Functionally, catalyzes the condensation of pantoate with beta-alanine in an ATP-dependent reaction via a pantoyl-adenylate intermediate. The sequence is that of Pantothenate synthetase from Acinetobacter baylyi (strain ATCC 33305 / BD413 / ADP1).